The following is a 278-amino-acid chain: Ribosomal RNA small subunit methyltransferase A (278 aa).

6 residues coordinate S-adenosyl-L-methionine: Asn28, Leu30, Gly55, Glu77, Asp103, and Asn122.

Belongs to the class I-like SAM-binding methyltransferase superfamily. rRNA adenine N(6)-methyltransferase family. RsmA subfamily.

It localises to the cytoplasm. It carries out the reaction adenosine(1518)/adenosine(1519) in 16S rRNA + 4 S-adenosyl-L-methionine = N(6)-dimethyladenosine(1518)/N(6)-dimethyladenosine(1519) in 16S rRNA + 4 S-adenosyl-L-homocysteine + 4 H(+). Specifically dimethylates two adjacent adenosines (A1518 and A1519) in the loop of a conserved hairpin near the 3'-end of 16S rRNA in the 30S particle. May play a critical role in biogenesis of 30S subunits. This chain is Ribosomal RNA small subunit methyltransferase A, found in Cereibacter sphaeroides (strain ATCC 17023 / DSM 158 / JCM 6121 / CCUG 31486 / LMG 2827 / NBRC 12203 / NCIMB 8253 / ATH 2.4.1.) (Rhodobacter sphaeroides).